A 141-amino-acid chain; its full sequence is Nucleoside diphosphate kinase (141 aa).

ATP contacts are provided by lysine 11, phenylalanine 59, arginine 87, threonine 93, arginine 104, and asparagine 114. The Pros-phosphohistidine intermediate role is filled by histidine 117.

This sequence belongs to the NDK family. Homotetramer. Requires Mg(2+) as cofactor.

It is found in the cytoplasm. The catalysed reaction is a 2'-deoxyribonucleoside 5'-diphosphate + ATP = a 2'-deoxyribonucleoside 5'-triphosphate + ADP. It catalyses the reaction a ribonucleoside 5'-diphosphate + ATP = a ribonucleoside 5'-triphosphate + ADP. Major role in the synthesis of nucleoside triphosphates other than ATP. The ATP gamma phosphate is transferred to the NDP beta phosphate via a ping-pong mechanism, using a phosphorylated active-site intermediate. In Azoarcus sp. (strain BH72), this protein is Nucleoside diphosphate kinase.